The sequence spans 115 residues: Large ribosomal subunit protein bL20c (115 aa).

The protein belongs to the bacterial ribosomal protein bL20 family.

It localises to the plastid. It is found in the chloroplast. Functionally, binds directly to 23S ribosomal RNA and is necessary for the in vitro assembly process of the 50S ribosomal subunit. It is not involved in the protein synthesizing functions of that subunit. The chain is Large ribosomal subunit protein bL20c from Nymphaea alba (White water-lily).